The following is an 85-amino-acid chain: Protein BTH_I0359 (85 aa).

The protein is Protein BTH_I0359 of Burkholderia thailandensis (strain ATCC 700388 / DSM 13276 / CCUG 48851 / CIP 106301 / E264).